Reading from the N-terminus, the 202-residue chain is MTNTLDVLKARASVKEYDTNAPISKEELTELLDLATKAPSAWNLQHWHFTVFHSDESKAELLPVAYNQKQIVESSAVVAILGDLKANENGEEVYAELASQGYITDEIKQTLLGQINGAYQSEQFARDSAFLNASLAAMQLMIAAKAKGYDTCAIGGFNKEQFQKQFDISERYVPVMLISIGKAVKPAHQSNRLPLSKVSTWL.

FMN-binding positions include 11–13 (RAS), 68–70 (QKQ), 155–156 (GG), and Arg-192.

It belongs to the nitroreductase family. Requires FMN as cofactor.

Its subcellular location is the cytoplasm. Functionally, putative nitroreductase that may contribute to the degradation of aromatic compounds. This Bacillus subtilis (strain 168) protein is Putative NAD(P)H nitroreductase YodC (yodC).